Here is a 228-residue protein sequence, read N- to C-terminus: Cytidylate kinase (228 aa).

Position 10 to 18 (10 to 18 (GPSGSGKGT)) interacts with ATP.

The protein belongs to the cytidylate kinase family. Type 1 subfamily.

The protein resides in the cytoplasm. The catalysed reaction is CMP + ATP = CDP + ADP. It catalyses the reaction dCMP + ATP = dCDP + ADP. The chain is Cytidylate kinase from Acinetobacter baumannii (strain ACICU).